The following is a 194-amino-acid chain: Histone H1.0 (194 aa).

The residue at position 1 (methionine 1) is an N-acetylmethionine. Residues 1-11 are compositionally biased toward low complexity; that stretch reads MTENSTSAPAA. Residues 1-29 are disordered; the sequence is MTENSTSAPAAKPKRAKASKKSTDHPKYS. Threonine 2 bears the N-acetylthreonine; in Histone H1.0, N-terminally processed mark. One can recognise an H15 domain in the interval 24–97; sequence DHPKYSDMVV…GASGSFRLAK (74 aa). Arginine 42 carries the post-translational modification Citrulline. The tract at residues 84–194 is disordered; the sequence is TKGVGASGSF…SSAKRAGKKK (111 aa). At serine 104 the chain carries ADP-ribosylserine. Positions 105–194 are enriched in basic residues; the sequence is VAFKKTKKEI…SSAKRAGKKK (90 aa).

It belongs to the histone H1/H5 family. In terms of processing, ADP-ribosylated on Ser-104 in response to DNA damage.

The protein localises to the nucleus. The protein resides in the chromosome. Its function is as follows. Histones H1 are necessary for the condensation of nucleosome chains into higher-order structures. The histones H1.0 are found in cells that are in terminal stages of differentiation or that have low rates of cell division. The sequence is that of Histone H1.0 (H1-0) from Pongo abelii (Sumatran orangutan).